A 396-amino-acid chain; its full sequence is Putative F-box/kelch-repeat protein At3g17540 (396 aa).

The region spanning Thr-4 to Asn-50 is the F-box domain. 3 Kelch repeats span residues Leu-163–Leu-209, Val-253–Val-299, and Arg-338–Gly-386.

This is Putative F-box/kelch-repeat protein At3g17540 from Arabidopsis thaliana (Mouse-ear cress).